A 465-amino-acid chain; its full sequence is ATP synthase subunit beta (465 aa).

Residue 152–159 (GGAGVGKT) coordinates ATP.

The protein belongs to the ATPase alpha/beta chains family. F-type ATPases have 2 components, CF(1) - the catalytic core - and CF(0) - the membrane proton channel. CF(1) has five subunits: alpha(3), beta(3), gamma(1), delta(1), epsilon(1). CF(0) has three main subunits: a(1), b(2) and c(9-12). The alpha and beta chains form an alternating ring which encloses part of the gamma chain. CF(1) is attached to CF(0) by a central stalk formed by the gamma and epsilon chains, while a peripheral stalk is formed by the delta and b chains.

It localises to the cell inner membrane. The enzyme catalyses ATP + H2O + 4 H(+)(in) = ADP + phosphate + 5 H(+)(out). Its function is as follows. Produces ATP from ADP in the presence of a proton gradient across the membrane. The catalytic sites are hosted primarily by the beta subunits. The polypeptide is ATP synthase subunit beta (Campylobacter hominis (strain ATCC BAA-381 / DSM 21671 / CCUG 45161 / LMG 19568 / NCTC 13146 / CH001A)).